The following is a 635-amino-acid chain: Threonine--tRNA ligase (635 aa).

The TGS domain occupies 1–62; the sequence is MITITLPDGS…EHDAMLRIIT (62 aa). Positions 244-535 are catalytic; the sequence is DHRKIGKVQD…LIEHYAGIWP (292 aa). Zn(2+) contacts are provided by Cys335, His386, and His512.

The protein belongs to the class-II aminoacyl-tRNA synthetase family. As to quaternary structure, homodimer. It depends on Zn(2+) as a cofactor.

The protein resides in the cytoplasm. It carries out the reaction tRNA(Thr) + L-threonine + ATP = L-threonyl-tRNA(Thr) + AMP + diphosphate + H(+). Functionally, catalyzes the attachment of threonine to tRNA(Thr) in a two-step reaction: L-threonine is first activated by ATP to form Thr-AMP and then transferred to the acceptor end of tRNA(Thr). Also edits incorrectly charged L-seryl-tRNA(Thr). The protein is Threonine--tRNA ligase of Xylella fastidiosa (strain 9a5c).